A 337-amino-acid polypeptide reads, in one-letter code: GTP 3',8-cyclase (337 aa).

The 227-residue stretch at 17–243 (PFQRQYYYLR…HKSHTDGPAK (227 aa)) folds into the Radical SAM core domain. Arg-26 contributes to the GTP binding site. [4Fe-4S] cluster contacts are provided by Cys-33 and Cys-37. Tyr-39 contacts S-adenosyl-L-methionine. Cys-40 serves as a coordination point for [4Fe-4S] cluster. Arg-76 is a binding site for GTP. Gly-80 is a binding site for S-adenosyl-L-methionine. Position 107 (Thr-107) interacts with GTP. Ser-131 provides a ligand contact to S-adenosyl-L-methionine. Lys-168 is a binding site for GTP. Residue Met-202 coordinates S-adenosyl-L-methionine. The [4Fe-4S] cluster site is built by Cys-265 and Cys-268. Residue 270-272 (RLR) participates in GTP binding. Cys-282 lines the [4Fe-4S] cluster pocket.

The protein belongs to the radical SAM superfamily. MoaA family. Monomer and homodimer. [4Fe-4S] cluster is required as a cofactor.

The enzyme catalyses GTP + AH2 + S-adenosyl-L-methionine = (8S)-3',8-cyclo-7,8-dihydroguanosine 5'-triphosphate + 5'-deoxyadenosine + L-methionine + A + H(+). It participates in cofactor biosynthesis; molybdopterin biosynthesis. In terms of biological role, catalyzes the cyclization of GTP to (8S)-3',8-cyclo-7,8-dihydroguanosine 5'-triphosphate. In Haemophilus influenzae (strain ATCC 51907 / DSM 11121 / KW20 / Rd), this protein is GTP 3',8-cyclase.